We begin with the raw amino-acid sequence, 289 residues long: Ribosomal RNA small subunit methyltransferase H (289 aa).

S-adenosyl-L-methionine contacts are provided by residues 40-42, aspartate 60, phenylalanine 84, aspartate 106, and glutamine 113; that span reads GGH.

Belongs to the methyltransferase superfamily. RsmH family.

The protein localises to the cytoplasm. It catalyses the reaction cytidine(1402) in 16S rRNA + S-adenosyl-L-methionine = N(4)-methylcytidine(1402) in 16S rRNA + S-adenosyl-L-homocysteine + H(+). In terms of biological role, specifically methylates the N4 position of cytidine in position 1402 (C1402) of 16S rRNA. The protein is Ribosomal RNA small subunit methyltransferase H of Haemophilus influenzae (strain PittGG).